The following is a 39-amino-acid chain: Cytochrome b559 subunit beta (39 aa).

Residues 14–30 (WLAVHGLAVPTVSFLGS) traverse the membrane as a helical segment. Histidine 18 lines the heme pocket.

This sequence belongs to the PsbE/PsbF family. In terms of assembly, heterodimer of an alpha subunit and a beta subunit. PSII is composed of 1 copy each of membrane proteins PsbA, PsbB, PsbC, PsbD, PsbE, PsbF, PsbH, PsbI, PsbJ, PsbK, PsbL, PsbM, PsbT, PsbX, PsbY, PsbZ, Psb30/Ycf12, at least 3 peripheral proteins of the oxygen-evolving complex and a large number of cofactors. It forms dimeric complexes. Heme b serves as cofactor.

It localises to the plastid. Its subcellular location is the chloroplast thylakoid membrane. Its function is as follows. This b-type cytochrome is tightly associated with the reaction center of photosystem II (PSII). PSII is a light-driven water:plastoquinone oxidoreductase that uses light energy to abstract electrons from H(2)O, generating O(2) and a proton gradient subsequently used for ATP formation. It consists of a core antenna complex that captures photons, and an electron transfer chain that converts photonic excitation into a charge separation. This Lotus japonicus (Lotus corniculatus var. japonicus) protein is Cytochrome b559 subunit beta.